A 102-amino-acid chain; its full sequence is MNGIPMEHGLILASILFALGLVGLMMRRNMLFVLMSLEIMMNSAGLAFIVAGTRWGQPDGQVMFLLVITLAAAEASVGLALLLQLYRRFKTLDIDAASRLRG.

The next 3 membrane-spanning stretches (helical) occupy residues 4-24 (IPME…LVGL), 30-50 (MLFV…AFIV), and 62-82 (VMFL…LALL).

The protein belongs to the complex I subunit 4L family. In terms of assembly, NDH-1 is composed of 14 different subunits. Subunits NuoA, H, J, K, L, M, N constitute the membrane sector of the complex.

It localises to the cell inner membrane. It catalyses the reaction a quinone + NADH + 5 H(+)(in) = a quinol + NAD(+) + 4 H(+)(out). Its function is as follows. NDH-1 shuttles electrons from NADH, via FMN and iron-sulfur (Fe-S) centers, to quinones in the respiratory chain. The immediate electron acceptor for the enzyme in this species is believed to be ubiquinone. Couples the redox reaction to proton translocation (for every two electrons transferred, four hydrogen ions are translocated across the cytoplasmic membrane), and thus conserves the redox energy in a proton gradient. This chain is NADH-quinone oxidoreductase subunit K, found in Chromohalobacter salexigens (strain ATCC BAA-138 / DSM 3043 / CIP 106854 / NCIMB 13768 / 1H11).